Here is a 116-residue protein sequence, read N- to C-terminus: MTFEMLYSKIHRATITDANLNYVGSITIDENLAKLAKLREGMKVEIVNINNGERFSTYVILGKKRGEICVNGAAARKVAIGDVVIILAYASMNEDEMNVHKPCIVLVNEKNEILEK.

The Schiff-base intermediate with substrate; via pyruvic acid role is filled by S25. Pyruvic acid (Ser) is present on S25. Position 57 (T57) interacts with substrate. Y58 (proton donor) is an active-site residue. G72–A74 is a binding site for substrate.

This sequence belongs to the PanD family. In terms of assembly, heterooctamer of four alpha and four beta subunits. Pyruvate serves as cofactor. Post-translationally, is synthesized initially as an inactive proenzyme, which is activated by self-cleavage at a specific serine bond to produce a beta-subunit with a hydroxyl group at its C-terminus and an alpha-subunit with a pyruvoyl group at its N-terminus.

The protein localises to the cytoplasm. It carries out the reaction L-aspartate + H(+) = beta-alanine + CO2. The protein operates within cofactor biosynthesis; (R)-pantothenate biosynthesis; beta-alanine from L-aspartate: step 1/1. Catalyzes the pyruvoyl-dependent decarboxylation of aspartate to produce beta-alanine. This is Aspartate 1-decarboxylase from Helicobacter acinonychis (strain Sheeba).